Reading from the N-terminus, the 263-residue chain is MSTPSPQLLVAAAQRTLGMGKRKCPPRATCLHLAGEVLAVARGLKPAVLYDCNSAGVLALQSYLEELQGLGFLKPGLHILEIGENNLIVSPEYTCQHLEQTLLGTVAFVDVSCSQPHPSVLSLDQLPGLKSLIADIITRFQELLKGVSPGVSYSKLHSSDWNLCTLFGILLGYPVSYTFDLNHGEGNCLTMTPLRVFTAQISWLSGQPPVPLYSFSVPESLFPPLRNFLSAWEKELRTRFRAQNAFADLSISSEVVTLPAVAL.

Belongs to the UPF0739 family.

This chain is UPF0739 protein C1orf74 homolog, found in Rattus norvegicus (Rat).